Consider the following 448-residue polypeptide: Biotin carboxylase (448 aa).

The 445-residue stretch at 1-445 folds into the Biotin carboxylation domain; the sequence is MLEKVVIANR…NIHYLEKKLG (445 aa). Residues K116, K159, 165-166, 201-204, H209, and H236 contribute to the ATP site; these read GG and EKYL. An ATP-grasp domain is found at 120 to 317; sequence IKAMKKAGVP…LVKEQLRIAA (198 aa). Position 238 (K238) interacts with hydrogencarbonate. E276 and E288 together coordinate ATP. Mg(2+)-binding residues include E276, E288, and N290. Residues E276, E288, and N290 each coordinate Mn(2+). Hydrogencarbonate-binding residues include R292, V295, and R338. The active site involves R292. R338 serves as a coordination point for biotin.

Acetyl-CoA carboxylase is a heterohexamer of biotin carboxyl carrier protein, biotin carboxylase and the two subunits of carboxyl transferase in a 2:2 complex. Mg(2+) serves as cofactor. It depends on Mn(2+) as a cofactor.

It catalyses the reaction N(6)-biotinyl-L-lysyl-[protein] + hydrogencarbonate + ATP = N(6)-carboxybiotinyl-L-lysyl-[protein] + ADP + phosphate + H(+). It participates in lipid metabolism; malonyl-CoA biosynthesis; malonyl-CoA from acetyl-CoA: step 1/1. In terms of biological role, this protein is a component of the acetyl coenzyme A carboxylase complex; first, biotin carboxylase catalyzes the carboxylation of the carrier protein and then the transcarboxylase transfers the carboxyl group to form malonyl-CoA. The polypeptide is Biotin carboxylase (accC) (Haemophilus influenzae (strain ATCC 51907 / DSM 11121 / KW20 / Rd)).